Here is a 473-residue protein sequence, read N- to C-terminus: Trehalose-6-phosphate synthase (473 aa).

Arg10 contributes to the D-glucose 6-phosphate binding site. 21–22 (GG) provides a ligand contact to UDP-alpha-D-glucose. Residues Tyr76 and Asp130 each coordinate D-glucose 6-phosphate. UDP-alpha-D-glucose contacts are provided by Arg262 and Lys267. Arg300 contacts D-glucose 6-phosphate. UDP-alpha-D-glucose-binding positions include Phe339 and 365 to 369 (LVAKE). The disordered stretch occupies residues 454-473 (TPRSPERQQQNNVATFPKLA).

It belongs to the glycosyltransferase 20 family. Homotetramer.

The catalysed reaction is D-glucose 6-phosphate + UDP-alpha-D-glucose = alpha,alpha-trehalose 6-phosphate + UDP + H(+). Its pathway is glycan biosynthesis; trehalose biosynthesis. Probably involved in the osmoprotection via the biosynthesis of trehalose. Catalyzes the transfer of glucose from UDP-alpha-D-glucose (UDP-Glc) to D-glucose 6-phosphate (Glc-6-P) to form trehalose-6-phosphate. Acts with retention of the anomeric configuration of the UDP-sugar donor. The sequence is that of Trehalose-6-phosphate synthase from Salmonella paratyphi A (strain ATCC 9150 / SARB42).